Reading from the N-terminus, the 350-residue chain is Bifunctional methylenetetrahydrofolate dehydrogenase/cyclohydrolase, mitochondrial (350 aa).

The transit peptide at 1–35 (MAATSLMSALAARLLQPAHSCSLRLRPFHLAAVRN) directs the protein to the mitochondrion. K50 bears the N6-acetyllysine; alternate mark. A Glycyl lysine isopeptide (Lys-Gly) (interchain with G-Cter in SUMO2); alternate cross-link involves residue K50. Substrate-binding positions include 84 to 88 (YVLNK) and 131 to 133 (VQL). NAD(+) contacts are provided by residues 200-202 (GRS) and R233. Residue 309–313 (PGGVG) coordinates substrate.

Belongs to the tetrahydrofolate dehydrogenase/cyclohydrolase family. As to quaternary structure, homodimer. Mg(2+) is required as a cofactor.

It localises to the mitochondrion. It carries out the reaction (6R)-5,10-methylene-5,6,7,8-tetrahydrofolate + NAD(+) = (6R)-5,10-methenyltetrahydrofolate + NADH. The catalysed reaction is (6R)-5,10-methenyltetrahydrofolate + H2O = (6R)-10-formyltetrahydrofolate + H(+). Functionally, although its dehydrogenase activity is NAD-specific, it can also utilize NADP at a reduced efficiency. The chain is Bifunctional methylenetetrahydrofolate dehydrogenase/cyclohydrolase, mitochondrial (MTHFD2) from Homo sapiens (Human).